A 276-amino-acid chain; its full sequence is Foldase protein PrsA (276 aa).

The signal sequence occupies residues 1 to 18 (MRKWMIVAAVAAVFGLSA). C19 is lipidated: N-palmitoyl cysteine. C19 carries S-diacylglycerol cysteine lipidation. Residues 133–223 (KPKIRASHIL…YGYHIIKVTD (91 aa)) form the PpiC domain.

This sequence belongs to the PrsA family.

The protein resides in the cell membrane. The catalysed reaction is [protein]-peptidylproline (omega=180) = [protein]-peptidylproline (omega=0). Plays a major role in protein secretion by helping the post-translocational extracellular folding of several secreted proteins. The chain is Foldase protein PrsA from Geobacillus sp. (strain WCH70).